The following is a 101-amino-acid chain: Small ribosomal subunit protein uS14 (101 aa).

This sequence belongs to the universal ribosomal protein uS14 family. As to quaternary structure, part of the 30S ribosomal subunit. Contacts proteins S3 and S10.

Its function is as follows. Binds 16S rRNA, required for the assembly of 30S particles and may also be responsible for determining the conformation of the 16S rRNA at the A site. This chain is Small ribosomal subunit protein uS14, found in Buchnera aphidicola subsp. Schizaphis graminum (strain Sg).